Reading from the N-terminus, the 278-residue chain is Orotidine 5'-phosphate decarboxylase (278 aa).

Substrate contacts are provided by residues Asp-40, 62 to 64 (KTH), 93 to 102 (DRKFIDIGNT), Tyr-228, and Arg-246. Lys-95 serves as the catalytic Proton donor.

This sequence belongs to the OMP decarboxylase family.

The enzyme catalyses orotidine 5'-phosphate + H(+) = UMP + CO2. The protein operates within pyrimidine metabolism; UMP biosynthesis via de novo pathway; UMP from orotate: step 2/2. The polypeptide is Orotidine 5'-phosphate decarboxylase (PYR1) (Passalora fulva (Tomato leaf mold)).